Here is a 464-residue protein sequence, read N- to C-terminus: tRNA modification GTPase MnmE (464 aa).

The (6S)-5-formyl-5,6,7,8-tetrahydrofolate site is built by Arg-25, Glu-87, and Lys-130. Residues 226–386 enclose the TrmE-type G domain; that stretch reads GLSVVLAGQP…LRAELLRIAG (161 aa). Position 236 (Asn-236) interacts with K(+). Residues 236 to 241, 255 to 261, and 280 to 283 contribute to the GTP site; these read NVGKSS, TPIAGTT, and DTAG. Position 240 (Ser-240) interacts with Mg(2+). Positions 255, 257, and 260 each coordinate K(+). Residue Thr-261 coordinates Mg(2+). Residue Lys-464 participates in (6S)-5-formyl-5,6,7,8-tetrahydrofolate binding.

Belongs to the TRAFAC class TrmE-Era-EngA-EngB-Septin-like GTPase superfamily. TrmE GTPase family. As to quaternary structure, homodimer. Heterotetramer of two MnmE and two MnmG subunits. It depends on K(+) as a cofactor.

It is found in the cytoplasm. In terms of biological role, exhibits a very high intrinsic GTPase hydrolysis rate. Involved in the addition of a carboxymethylaminomethyl (cmnm) group at the wobble position (U34) of certain tRNAs, forming tRNA-cmnm(5)s(2)U34. The chain is tRNA modification GTPase MnmE from Burkholderia orbicola (strain MC0-3).